The sequence spans 203 residues: Imidazoleglycerol-phosphate dehydratase (203 aa).

It belongs to the imidazoleglycerol-phosphate dehydratase family.

Its subcellular location is the cytoplasm. The catalysed reaction is D-erythro-1-(imidazol-4-yl)glycerol 3-phosphate = 3-(imidazol-4-yl)-2-oxopropyl phosphate + H2O. Its pathway is amino-acid biosynthesis; L-histidine biosynthesis; L-histidine from 5-phospho-alpha-D-ribose 1-diphosphate: step 6/9. This is Imidazoleglycerol-phosphate dehydratase from Synechococcus sp. (strain RCC307).